Reading from the N-terminus, the 213-residue chain is Glycerol-3-phosphate acyltransferase (213 aa).

Transmembrane regions (helical) follow at residues Ile3–Ser23, Lys51–Ala71, Asp78–Phe98, Ala115–Phe135, and Leu140–Pro160.

This sequence belongs to the PlsY family. As to quaternary structure, probably interacts with PlsX.

Its subcellular location is the cell inner membrane. It catalyses the reaction an acyl phosphate + sn-glycerol 3-phosphate = a 1-acyl-sn-glycero-3-phosphate + phosphate. It participates in lipid metabolism; phospholipid metabolism. Its function is as follows. Catalyzes the transfer of an acyl group from acyl-phosphate (acyl-PO(4)) to glycerol-3-phosphate (G3P) to form lysophosphatidic acid (LPA). This enzyme utilizes acyl-phosphate as fatty acyl donor, but not acyl-CoA or acyl-ACP. In Burkholderia cenocepacia (strain HI2424), this protein is Glycerol-3-phosphate acyltransferase.